Here is a 197-residue protein sequence, read N- to C-terminus: Mediator of RNA polymerase II transcription subunit 10 (197 aa).

Residues Met1 to Ala39 form a disordered region. The span at Gly27–Asn37 shows a compositional bias: polar residues.

It belongs to the Mediator complex subunit 10 family. Component of the Mediator complex.

The protein localises to the nucleus. Component of the Mediator complex, a coactivator involved in the regulated transcription of nearly all RNA polymerase II-dependent genes. Mediator functions as a bridge to convey information from gene-specific regulatory proteins to the basal RNA polymerase II transcription machinery. Mediator is recruited to promoters by direct interactions with regulatory proteins and serves as a scaffold for the assembly of a functional preinitiation complex with RNA polymerase II and the general transcription factors. The protein is Mediator of RNA polymerase II transcription subunit 10 (NUT2) of Mycosarcoma maydis (Corn smut fungus).